A 233-amino-acid polypeptide reads, in one-letter code: Large ribosomal subunit protein uL1 (233 aa).

It belongs to the universal ribosomal protein uL1 family. As to quaternary structure, part of the 50S ribosomal subunit.

Its function is as follows. Binds directly to 23S rRNA. The L1 stalk is quite mobile in the ribosome, and is involved in E site tRNA release. Protein L1 is also a translational repressor protein, it controls the translation of the L11 operon by binding to its mRNA. This is Large ribosomal subunit protein uL1 from Shewanella halifaxensis (strain HAW-EB4).